We begin with the raw amino-acid sequence, 474 residues long: Dipeptidase A (474 aa).

Residue cysteine 6 is part of the active site.

This sequence belongs to the peptidase C69 family. As to quaternary structure, homooctamer.

The enzyme catalyses an L-aminoacyl-L-amino acid + H2O = 2 an L-alpha-amino acid. Its activity is regulated as follows. Inhibited by Zn(2+), Cu(2+), Ca(2+) and Cd(2+). In terms of biological role, hydrolyzes a wide range of dipeptides but unable to hydrolyze dipeptides containing proline. Highest activity against Met-Ala. This chain is Dipeptidase A (pepDA), found in Lactobacillus helveticus (Lactobacillus suntoryeus).